The chain runs to 477 residues: Transmembrane and coiled-coil domain protein 3 (477 aa).

Serine 46 is subject to Phosphoserine. Residues 112–153 (KQVFEKKNQKSAHSIAQLQKKLEQYHRKLREIEQNGASRSSK) are a coiled coil. Disordered stretches follow at residues 168 to 188 (KDAH…KSGM) and 249 to 277 (PKYG…GAGG). Serine 253 carries the post-translational modification Phosphoserine. Positions 258–273 (SSGTSGSADSNGNQSF) are enriched in polar residues. Residues 282-398 (DSQGKLAVIL…KLELHQQEQQ (117 aa)) are a coiled coil. Helical transmembrane passes span 417–437 (VILA…KFVS) and 450–470 (FFAV…LCAI).

It belongs to the TEX28 family. As to quaternary structure, may form homodimers and heterodimers with TMCC2 or TMCC3 via the coiled-coil domains. Interacts with ribosomal proteins RPL4 and RPS6. As to expression, widely expressed, with highest levels in brain, spinal cord and testis.

It is found in the endoplasmic reticulum membrane. The polypeptide is Transmembrane and coiled-coil domain protein 3 (Homo sapiens (Human)).